A 443-amino-acid polypeptide reads, in one-letter code: C4-dicarboxylate transport protein (443 aa).

A run of 7 helical transmembrane segments spans residues 7–26 (SLYV…GALF), 46–63 (MVIA…VAHM), 76–98 (ALIY…MNVL), 140–162 (LVSA…FGFA), 183–205 (VVFV…AMAF), 218–240 (LGYL…LGLI), and 350–372 (FITL…ALIL). The segment at 415-443 (GEDLPTTEPDVASEERGEGREIDSSRPVT) is disordered. The segment covering 427–443 (SEERGEGREIDSSRPVT) has biased composition (basic and acidic residues).

Belongs to the dicarboxylate/amino acid:cation symporter (DAACS) (TC 2.A.23) family.

Its subcellular location is the cell membrane. Its function is as follows. Responsible for the transport of dicarboxylates such as succinate, fumarate, and malate across the membrane. The protein is C4-dicarboxylate transport protein (dctA) of Deinococcus radiodurans (strain ATCC 13939 / DSM 20539 / JCM 16871 / CCUG 27074 / LMG 4051 / NBRC 15346 / NCIMB 9279 / VKM B-1422 / R1).